The primary structure comprises 596 residues: Lamin-B2 (596 aa).

The segment at 1–20 (MASLPPHAGPATPLSPTRLS) is disordered. The head stretch occupies residues 1-26 (MASLPPHAGPATPLSPTRLSRLQEKE). At T12 the chain carries Phosphothreonine. S15 is subject to Phosphoserine. The 357-residue stretch at 24–380 (EKEELRELND…KLLEGEEERL (357 aa)) folds into the IF rod domain. The coil 1A stretch occupies residues 27–61 (ELRELNDRLAHYIDRVRALELENDRLLLRISEKEE). K59 is modified (N6-acetyllysine; alternate). K59 participates in a covalent cross-link: Glycyl lysine isopeptide (Lys-Gly) (interchain with G-Cter in SUMO2); alternate. The tract at residues 62 to 73 (VTTREVSGIKTL) is linker 1. The coil 1B stretch occupies residues 74–207 (YESELADARR…AFSKSVFEEE (134 aa)). Glycyl lysine isopeptide (Lys-Gly) (interchain with G-Cter in SUMO2) cross-links involve residues K173 and K233. Residues 208–234 (VRETRRRHERRLVEVDSSRQQEYDFKM) are linker 2. The segment at 235–378 (AQALEDLRSQ…YRKLLEGEEE (144 aa)) is coil 2. Phosphoserine is present on residues S294 and S385. The interval 376-440 (EEERLKLSPS…ASRVSSGSRL (65 aa)) is disordered. Residues 379–596 (RLKLSPSPSS…RTTSRGCRLM (218 aa)) are tail. Residues 382-403 (LSPSPSSRITISRATSSSSSSS) show a composition bias toward low complexity. The O-linked (GlcNAc) threonine glycan is linked to T391. Phosphoserine is present on residues S398, S400, and S402. Omega-N-methylarginine is present on R413. Residues 415–420 (KRRRLE) carry the Nuclear localization signal motif. The span at 425–439 (SGSPSRASRVSSGSR) shows a compositional bias: low complexity. In terms of domain architecture, LTD spans 438–559 (SRLAQQTVAT…VKAAKHSSVQ (122 aa)). K465 participates in a covalent cross-link: Glycyl lysine isopeptide (Lys-Gly) (interchain with G-Cter in SUMO2). The residue at position 473 (S473) is a Phosphoserine. Residues 552–596 (AAKHSSVQGRENGEEEEEEEAEFGEEDLFHQQGDPRTTSRGCRLM) are disordered. Residues 564–577 (GEEEEEEEAEFGEE) show a composition bias toward acidic residues. Over residues 585-596 (DPRTTSRGCRLM) the composition is skewed to polar residues. Cysteine methyl ester is present on C593. C593 is lipidated: S-farnesyl cysteine. A propeptide spans 594-596 (RLM) (removed in mature form).

Belongs to the intermediate filament family. In terms of assembly, dimer. Lamin dimers then assemble into dimeric head-to-tail polymers. Ultimately, two head-to-tail polymers assemble laterally into a protofilament with a uniformly shaped rod of 3.5 nm in diameter. Interacts with TMEM43. In terms of processing, B-type lamins undergo a series of modifications, such as farnesylation and phosphorylation. Increased phosphorylation of the lamins occurs before envelope disintegration and probably plays a role in regulating lamin associations. Phosphorylation plays a key role in lamin organization, subcellular localization and nuclear envelope disintegration. Phosphorylation by CDK1 at Ser-15 and Ser-385 at the onset of mitosis drives lamin disassembly and nuclear envelope breakdown. Germ cell-specific.

It localises to the nucleus lamina. Its function is as follows. Lamins are intermediate filament proteins that assemble into a filamentous meshwork, and which constitute the major components of the nuclear lamina, a fibrous layer on the nucleoplasmic side of the inner nuclear membrane. Lamins provide a framework for the nuclear envelope, bridging the nuclear envelope and chromatin, thereby playing an important role in nuclear assembly, chromatin organization, nuclear membrane and telomere dynamics. The structural integrity of the lamina is strictly controlled by the cell cycle, as seen by the disintegration and formation of the nuclear envelope in prophase and telophase, respectively. This is Lamin-B2 (Lmnb2) from Mus musculus (Mouse).